A 342-amino-acid chain; its full sequence is S-adenosylmethionine:tRNA ribosyltransferase-isomerase (342 aa).

It belongs to the QueA family. Monomer.

It localises to the cytoplasm. It catalyses the reaction 7-aminomethyl-7-carbaguanosine(34) in tRNA + S-adenosyl-L-methionine = epoxyqueuosine(34) in tRNA + adenine + L-methionine + 2 H(+). The protein operates within tRNA modification; tRNA-queuosine biosynthesis. Its function is as follows. Transfers and isomerizes the ribose moiety from AdoMet to the 7-aminomethyl group of 7-deazaguanine (preQ1-tRNA) to give epoxyqueuosine (oQ-tRNA). In Bacillus velezensis (strain DSM 23117 / BGSC 10A6 / LMG 26770 / FZB42) (Bacillus amyloliquefaciens subsp. plantarum), this protein is S-adenosylmethionine:tRNA ribosyltransferase-isomerase.